The following is a 195-amino-acid chain: ATP-dependent Clp protease proteolytic subunit (195 aa).

S98 functions as the Nucleophile in the catalytic mechanism. Residue H123 is part of the active site.

The protein belongs to the peptidase S14 family. As to quaternary structure, fourteen ClpP subunits assemble into 2 heptameric rings which stack back to back to give a disk-like structure with a central cavity, resembling the structure of eukaryotic proteasomes.

It is found in the cytoplasm. The enzyme catalyses Hydrolysis of proteins to small peptides in the presence of ATP and magnesium. alpha-casein is the usual test substrate. In the absence of ATP, only oligopeptides shorter than five residues are hydrolyzed (such as succinyl-Leu-Tyr-|-NHMec, and Leu-Tyr-Leu-|-Tyr-Trp, in which cleavage of the -Tyr-|-Leu- and -Tyr-|-Trp bonds also occurs).. In terms of biological role, cleaves peptides in various proteins in a process that requires ATP hydrolysis. Has a chymotrypsin-like activity. Plays a major role in the degradation of misfolded proteins. This is ATP-dependent Clp protease proteolytic subunit from Thermoanaerobacter pseudethanolicus (strain ATCC 33223 / 39E) (Clostridium thermohydrosulfuricum).